Consider the following 274-residue polypeptide: uncharacterized protein (274 aa).

Residues 3 to 141 (IFIPKARRPT…TIRIGISLKQ (139 aa)) form the C2 NT-type domain.

To yeast YBL086c.

This is an uncharacterized protein from Schizosaccharomyces pombe (strain 972 / ATCC 24843) (Fission yeast).